The following is a 140-amino-acid chain: Perlin matrix protein (140 aa).

The N-terminal stretch at 1–26 is a signal peptide; that stretch reads MTCTLRLTVAALVLLGICHLSRPVAA.

Belongs to the N16 matrix protein family. In terms of assembly, heterooligomer; disulfide-linked. Pif97, Pif80, N16 and other proteins form a complex. In terms of tissue distribution, component of conchiolin, the organic matrix of nacre. Only expressed in the dorsal region of the mantle.

Its subcellular location is the secreted. It localises to the extracellular space. The protein localises to the extracellular matrix. Functionally, may be specifically involved in the formation of the nacreous layer. This chain is Perlin matrix protein, found in Margaritifera margaritifera (Freshwater pearl mussel).